Here is a 271-residue protein sequence, read N- to C-terminus: 4-diphosphocytidyl-2-C-methyl-D-erythritol kinase (271 aa).

Lysine 17 is an active-site residue. 97–107 provides a ligand contact to ATP; the sequence is PVGSGLGGGSS. The active site involves aspartate 137.

Belongs to the GHMP kinase family. IspE subfamily.

The enzyme catalyses 4-CDP-2-C-methyl-D-erythritol + ATP = 4-CDP-2-C-methyl-D-erythritol 2-phosphate + ADP + H(+). Its pathway is isoprenoid biosynthesis; isopentenyl diphosphate biosynthesis via DXP pathway; isopentenyl diphosphate from 1-deoxy-D-xylulose 5-phosphate: step 3/6. Its function is as follows. Catalyzes the phosphorylation of the position 2 hydroxy group of 4-diphosphocytidyl-2C-methyl-D-erythritol. The polypeptide is 4-diphosphocytidyl-2-C-methyl-D-erythritol kinase (Thermotoga maritima (strain ATCC 43589 / DSM 3109 / JCM 10099 / NBRC 100826 / MSB8)).